The chain runs to 192 residues: NF-kappa-B inhibitor-interacting Ras-like protein 1 (192 aa).

A GTP-binding site is contributed by 11 to 18 (GLLSVGKT). The Effector region signature appears at 35–43 (DCETMEDVY). The tract at residues 58–93 (HLYDTRGLQEGVELPKHYFSFADGFVLVYSVNNLES) is interactions with NFKBIA and NFKBIB. GTP is bound by residues 61-65 (DTRGL) and 120-123 (NKID). The disordered stretch occupies residues 168–192 (LSQPQSKSSFPLPGRKNKGNSSSEN).

Belongs to the small GTPase superfamily. Ras family. KappaB-Ras subfamily. As to quaternary structure, interacts with both NF-kappa-B inhibitor alpha (NFKBIA) and beta (NFKBIB) in vitro. However, it probably only interacts with NFKBIB in vivo. Forms a complex with NFKBIB and NF-kappa-B heterodimer (p50/NFKB1 and p65/RELA). Also interacts with c-Rel (REL).

The protein resides in the cytoplasm. Functionally, atypical Ras-like protein that acts as a potent regulator of NF-kappa-B activity by preventing the degradation of NF-kappa-B inhibitor beta (NFKBIB) by most signals, explaining why NFKBIB is more resistant to degradation. May act by blocking phosphorylation of NFKBIB and mediating cytoplasmic retention of p65/RELA NF-kappa-B subunit. It is unclear whether it acts as a GTPase. Both GTP- and GDP-bound forms block phosphorylation of NFKBIB. The sequence is that of NF-kappa-B inhibitor-interacting Ras-like protein 1 (NKIRAS1) from Macaca fascicularis (Crab-eating macaque).